A 949-amino-acid chain; its full sequence is Bifunctional uridylyltransferase/uridylyl-removing enzyme (949 aa).

The segment at 1–377 (MARHETSFPE…RFRNRVRKIA (377 aa)) is uridylyltransferase. Residues 378-733 (GTLDFVDDGG…VRTHDFHAIT (356 aa)) form a uridylyl-removing region. Residues 494–610 (VDEHLLRSVD…VDFAERVQSL (117 aa)) form the HD domain. 2 consecutive ACT domains span residues 734 to 816 (EITV…VIAS) and 845 to 926 (VIEV…ERMP). The interval 926–949 (PSGIIAPTPVSRVPHGSKTTKAET) is disordered.

This sequence belongs to the GlnD family. It depends on Mg(2+) as a cofactor.

The enzyme catalyses [protein-PII]-L-tyrosine + UTP = [protein-PII]-uridylyl-L-tyrosine + diphosphate. It carries out the reaction [protein-PII]-uridylyl-L-tyrosine + H2O = [protein-PII]-L-tyrosine + UMP + H(+). Its activity is regulated as follows. Uridylyltransferase (UTase) activity is inhibited by glutamine, while glutamine activates uridylyl-removing (UR) activity. Modifies, by uridylylation and deuridylylation, the PII regulatory proteins (GlnB and homologs), in response to the nitrogen status of the cell that GlnD senses through the glutamine level. Under low glutamine levels, catalyzes the conversion of the PII proteins and UTP to PII-UMP and PPi, while under higher glutamine levels, GlnD hydrolyzes PII-UMP to PII and UMP (deuridylylation). Thus, controls uridylylation state and activity of the PII proteins, and plays an important role in the regulation of nitrogen fixation and metabolism. This chain is Bifunctional uridylyltransferase/uridylyl-removing enzyme, found in Rhizobium meliloti (strain 1021) (Ensifer meliloti).